Here is a 478-residue protein sequence, read N- to C-terminus: Sulfate adenylyltransferase subunit 1 (478 aa).

The 217-residue stretch at 24–240 folds into the tr-type G domain; the sequence is KSLLRFLTCG…VLENVDIDAD (217 aa). The interval 33–40 is G1; that stretch reads GSVDDGKS. Position 33–40 (33–40) interacts with GTP; sequence GSVDDGKS. The interval 91-95 is G2; that stretch reads GITID. Residues 112-115 are G3; it reads DTPG. Residues 112 to 116 and 167 to 170 each bind GTP; these read DTPGH and NKMD. A G4 region spans residues 167 to 170; the sequence is NKMD. The G5 stretch occupies residues 206–208; the sequence is SAL.

It belongs to the TRAFAC class translation factor GTPase superfamily. Classic translation factor GTPase family. CysN/NodQ subfamily. As to quaternary structure, heterodimer composed of CysD, the smaller subunit, and CysN.

The enzyme catalyses sulfate + ATP + H(+) = adenosine 5'-phosphosulfate + diphosphate. It participates in sulfur metabolism; hydrogen sulfide biosynthesis; sulfite from sulfate: step 1/3. Its function is as follows. With CysD forms the ATP sulfurylase (ATPS) that catalyzes the adenylation of sulfate producing adenosine 5'-phosphosulfate (APS) and diphosphate, the first enzymatic step in sulfur assimilation pathway. APS synthesis involves the formation of a high-energy phosphoric-sulfuric acid anhydride bond driven by GTP hydrolysis by CysN coupled to ATP hydrolysis by CysD. This Aliivibrio fischeri (strain ATCC 700601 / ES114) (Vibrio fischeri) protein is Sulfate adenylyltransferase subunit 1.